We begin with the raw amino-acid sequence, 243 residues long: Trypsin (243 aa).

A signal peptide spans 1 to 15; it reads MKFLLLCVLLGAAAA. Positions 16 to 20 are cleaved as a propeptide — activation peptide; it reads FDDDK. Residues 21–241 enclose the Peptidase S1 domain; it reads IIGGATCAKS…YNAWIQNTIA (221 aa). 6 disulfide bridges follow: Cys27–Cys157, Cys45–Cys61, Cys129–Cys230, Cys136–Cys203, Cys168–Cys182, and Cys193–Cys217. His60 (charge relay system) is an active-site residue. Residues Glu72, Asn74, and Glu82 each coordinate Ca(2+). Asp104 functions as the Charge relay system in the catalytic mechanism. Residue Ser197 is the Charge relay system of the active site.

The protein belongs to the peptidase S1 family. Ca(2+) serves as cofactor.

Its subcellular location is the secreted. It localises to the extracellular space. The enzyme catalyses Preferential cleavage: Arg-|-Xaa, Lys-|-Xaa.. The protein is Trypsin of Xenopus laevis (African clawed frog).